The chain runs to 94 residues: Acylphosphatase (94 aa).

An Acylphosphatase-like domain is found at alanine 7–alanine 94. Residues arginine 22 and asparagine 40 contribute to the active site.

This sequence belongs to the acylphosphatase family.

The catalysed reaction is an acyl phosphate + H2O = a carboxylate + phosphate + H(+). In Mesorhizobium japonicum (strain LMG 29417 / CECT 9101 / MAFF 303099) (Mesorhizobium loti (strain MAFF 303099)), this protein is Acylphosphatase (acyP).